Here is an 87-residue protein sequence, read N- to C-terminus: Small ribosomal subunit protein bS20 (87 aa).

A disordered region spans residues 1 to 27 (MANSVQATKRARQAEKHRQHNAGMRAA). Residues 9-20 (KRARQAEKHRQH) show a composition bias toward basic residues.

This sequence belongs to the bacterial ribosomal protein bS20 family.

Its function is as follows. Binds directly to 16S ribosomal RNA. The polypeptide is Small ribosomal subunit protein bS20 (Hydrogenovibrio crunogenus (strain DSM 25203 / XCL-2) (Thiomicrospira crunogena)).